The sequence spans 688 residues: Methionine--tRNA ligase (688 aa).

The 'HIGH' region signature appears at 20-30 (PYANGSIHLGH). The Zn(2+) site is built by C151, C154, C164, and C167. Residues 337-341 (KMSKS) carry the 'KMSKS' region motif. Residue K340 participates in ATP binding. In terms of domain architecture, tRNA-binding spans 587-688 (TFAQVDLRIA…EGAQPGMRVM (102 aa)).

This sequence belongs to the class-I aminoacyl-tRNA synthetase family. MetG type 1 subfamily. In terms of assembly, homodimer. Requires Zn(2+) as cofactor.

The protein resides in the cytoplasm. It carries out the reaction tRNA(Met) + L-methionine + ATP = L-methionyl-tRNA(Met) + AMP + diphosphate. Functionally, is required not only for elongation of protein synthesis but also for the initiation of all mRNA translation through initiator tRNA(fMet) aminoacylation. The sequence is that of Methionine--tRNA ligase from Vibrio parahaemolyticus serotype O3:K6 (strain RIMD 2210633).